A 514-amino-acid polypeptide reads, in one-letter code: Endoglucanase MaCel5A (514 aa).

The N-terminal stretch at 1-23 (MKRILFTAGGCLFYLLLAVKAYA) is a signal peptide. Low complexity-rich tracts occupy residues 91–114 (GSSSSSSSSSSSSSGSSSSSSGSG) and 179–201 (SSSSSSGGTSSSGSSSSGVSSSG). 2 disordered regions span residues 91–118 (GSSSSSSSSSSSSSGSSSSSSGSGSSSG) and 179–208 (SSSSSSGGTSSSGSSSSGVSSSGGSSGGDS). E346 acts as the Proton donor in catalysis. E439 (nucleophile) is an active-site residue.

It belongs to the glycosyl hydrolase 5 (cellulase A) family.

The enzyme catalyses Endohydrolysis of (1-&gt;4)-beta-D-glucosidic linkages in cellulose, lichenin and cereal beta-D-glucans.. Exhibits strong halostability and halotolerance. The activity increases about tenfold in the presence of 0.5 M NaCl, and about fivefold in the presence of 4.0 M NaCl. Tolerates detergents, but activity is decreased in the presence of EDTA. Activity is enhanced in the presence of Mn(2+), Ca(2+), Ba(2+) or Mg(2+), and decreased in the presence of Zn(2+), Cu(2+), Al(3+) or Fe(3+). In terms of biological role, endoglucanase that exhibits highest activity toward barley beta-glucan, lower activity toward carboxymethyl cellulose (CMC-Na), and marginal activity toward laminarin and xylan. This chain is Endoglucanase MaCel5A, found in Microbulbifer sp. (strain ALW1).